Here is a 464-residue protein sequence, read N- to C-terminus: Siroheme synthase (464 aa).

The interval 1 to 203 (MKYLPLFHNL…GQGAEAERLL (203 aa)) is precorrin-2 dehydrogenase /sirohydrochlorin ferrochelatase. NAD(+) contacts are provided by residues 22–23 (EI) and 43–44 (PE). A Phosphoserine modification is found at serine 128. Residues 216-464 (GEVYLVGAGP…AWFEGAQGQI (249 aa)) form a uroporphyrinogen-III C-methyltransferase region. Position 225 (proline 225) interacts with S-adenosyl-L-methionine. Residue aspartate 248 is the Proton acceptor of the active site. Lysine 270 serves as the catalytic Proton donor. Residues 301 to 303 (GGD), isoleucine 306, 331 to 332 (TA), methionine 383, and glycine 412 each bind S-adenosyl-L-methionine.

This sequence in the N-terminal section; belongs to the precorrin-2 dehydrogenase / sirohydrochlorin ferrochelatase family. It in the C-terminal section; belongs to the precorrin methyltransferase family.

The enzyme catalyses uroporphyrinogen III + 2 S-adenosyl-L-methionine = precorrin-2 + 2 S-adenosyl-L-homocysteine + H(+). The catalysed reaction is precorrin-2 + NAD(+) = sirohydrochlorin + NADH + 2 H(+). It catalyses the reaction siroheme + 2 H(+) = sirohydrochlorin + Fe(2+). It functions in the pathway cofactor biosynthesis; adenosylcobalamin biosynthesis; precorrin-2 from uroporphyrinogen III: step 1/1. The protein operates within cofactor biosynthesis; adenosylcobalamin biosynthesis; sirohydrochlorin from precorrin-2: step 1/1. Its pathway is porphyrin-containing compound metabolism; siroheme biosynthesis; precorrin-2 from uroporphyrinogen III: step 1/1. It participates in porphyrin-containing compound metabolism; siroheme biosynthesis; siroheme from sirohydrochlorin: step 1/1. It functions in the pathway porphyrin-containing compound metabolism; siroheme biosynthesis; sirohydrochlorin from precorrin-2: step 1/1. Multifunctional enzyme that catalyzes the SAM-dependent methylations of uroporphyrinogen III at position C-2 and C-7 to form precorrin-2 via precorrin-1. Then it catalyzes the NAD-dependent ring dehydrogenation of precorrin-2 to yield sirohydrochlorin. Finally, it catalyzes the ferrochelation of sirohydrochlorin to yield siroheme. This chain is Siroheme synthase, found in Pseudomonas fluorescens (strain Pf0-1).